The sequence spans 463 residues: ATP-dependent protease ATPase subunit HslU (463 aa).

ATP is bound by residues Val-21, 63–68, Asp-276, Glu-341, and Arg-413; that span reads GVGKTE.

The protein belongs to the ClpX chaperone family. HslU subfamily. As to quaternary structure, a double ring-shaped homohexamer of HslV is capped on each side by a ring-shaped HslU homohexamer. The assembly of the HslU/HslV complex is dependent on binding of ATP.

The protein localises to the cytoplasm. Functionally, ATPase subunit of a proteasome-like degradation complex; this subunit has chaperone activity. The binding of ATP and its subsequent hydrolysis by HslU are essential for unfolding of protein substrates subsequently hydrolyzed by HslV. HslU recognizes the N-terminal part of its protein substrates and unfolds these before they are guided to HslV for hydrolysis. In Thermotoga neapolitana (strain ATCC 49049 / DSM 4359 / NBRC 107923 / NS-E), this protein is ATP-dependent protease ATPase subunit HslU.